The primary structure comprises 333 residues: Transcription factor MYB94 (333 aa).

2 HTH myb-type domains span residues 9-65 (KIGV…RPGI) and 66-116 (KRGN…KKKL). 2 consecutive DNA-binding regions (H-T-H motif) follow at residues 37-61 (WRSV…TNYL) and 89-112 (WAAI…NTHL). Residues 134-154 (KDFSISNKNTTSHQSSNSSKG) show a composition bias toward polar residues. Disordered stretches follow at residues 134-157 (KDFS…GQWE) and 183-218 (PTNF…YPSG). Positions 196–209 (SSSSSSTTTTTTTT) are enriched in low complexity.

As to expression, expressed in germinating seeds, rosette and cauline leaves, flower buds, open flowers, stems and developing siliques.

The protein localises to the nucleus. Its function is as follows. Transcription activator involved in the activation of cuticular wax biosynthesis under drought stress. Binds directly to the promoters of genes involved in cuticular wax biosynthesis. Transactivates WSD1, KCS2/DAISY, CER1, CER2, FAR3 and ECR genes. Functions together with MYB96 in the activation of cuticular wax biosynthesis. In Arabidopsis thaliana (Mouse-ear cress), this protein is Transcription factor MYB94.